The following is a 42-amino-acid chain: Cytochrome b6-f complex subunit 7 (42 aa).

Residues isoleucine 15–alanine 35 traverse the membrane as a helical segment.

It belongs to the PetM family. As to quaternary structure, the 4 large subunits of the cytochrome b6-f complex are cytochrome b6, subunit IV (17 kDa polypeptide, PetD), cytochrome f and the Rieske protein, while the 4 small subunits are PetG, PetL, PetM and PetN. The complex functions as a dimer.

It is found in the plastid. The protein localises to the chloroplast thylakoid membrane. Its function is as follows. Component of the cytochrome b6-f complex, which mediates electron transfer between photosystem II (PSII) and photosystem I (PSI), cyclic electron flow around PSI, and state transitions. In Trieres chinensis (Marine centric diatom), this protein is Cytochrome b6-f complex subunit 7.